The sequence spans 73 residues: uncharacterized protein (73 aa).

This is an uncharacterized protein from Vaccinia virus (strain Copenhagen) (VACV).